A 359-amino-acid polypeptide reads, in one-letter code: 3-dehydroquinate synthase (359 aa).

NAD(+)-binding positions include 71 to 76 (DGEQYK), 105 to 109 (GVIGD), 129 to 130 (TT), K142, K151, and 169 to 172 (CLST). The Zn(2+) site is built by E184, H247, and H264.

Belongs to the sugar phosphate cyclases superfamily. Dehydroquinate synthase family. The cofactor is Co(2+). It depends on Zn(2+) as a cofactor. NAD(+) serves as cofactor.

It localises to the cytoplasm. The catalysed reaction is 7-phospho-2-dehydro-3-deoxy-D-arabino-heptonate = 3-dehydroquinate + phosphate. The protein operates within metabolic intermediate biosynthesis; chorismate biosynthesis; chorismate from D-erythrose 4-phosphate and phosphoenolpyruvate: step 2/7. Functionally, catalyzes the conversion of 3-deoxy-D-arabino-heptulosonate 7-phosphate (DAHP) to dehydroquinate (DHQ). This chain is 3-dehydroquinate synthase, found in Shewanella pealeana (strain ATCC 700345 / ANG-SQ1).